A 694-amino-acid polypeptide reads, in one-letter code: Elongation factor G (694 aa).

The 275-residue stretch at 12-286 (SKLRNIGIMA…AVVDYLPSPI (275 aa)) folds into the tr-type G domain. GTP contacts are provided by residues 21-28 (AHIDAGKT), 85-89 (DTPGH), and 139-142 (NKMD).

The protein belongs to the TRAFAC class translation factor GTPase superfamily. Classic translation factor GTPase family. EF-G/EF-2 subfamily.

It localises to the cytoplasm. Functionally, catalyzes the GTP-dependent ribosomal translocation step during translation elongation. During this step, the ribosome changes from the pre-translocational (PRE) to the post-translocational (POST) state as the newly formed A-site-bound peptidyl-tRNA and P-site-bound deacylated tRNA move to the P and E sites, respectively. Catalyzes the coordinated movement of the two tRNA molecules, the mRNA and conformational changes in the ribosome. This Pseudothermotoga lettingae (strain ATCC BAA-301 / DSM 14385 / NBRC 107922 / TMO) (Thermotoga lettingae) protein is Elongation factor G.